We begin with the raw amino-acid sequence, 626 residues long: Chaperone protein HtpG (626 aa).

Positions 1 to 332 (MTNNDTPGMR…TEDLPLNVSR (332 aa)) are a; substrate-binding. The interval 333–546 (EVVQSSKVMA…KDSLDSSMEK (214 aa)) is b. Residues 547–626 (MMKMMHAEMP…ELIEAATMSR (80 aa)) form a c region.

It belongs to the heat shock protein 90 family. As to quaternary structure, homodimer.

The protein localises to the cytoplasm. Molecular chaperone. Has ATPase activity. This chain is Chaperone protein HtpG, found in Chlorobium phaeobacteroides (strain DSM 266 / SMG 266 / 2430).